A 296-amino-acid chain; its full sequence is tRNA uridine(34) hydroxylase (296 aa).

The region spanning 121 to 215 (AQPDVAVIDT…YLEDIPQDQS (95 aa)) is the Rhodanese domain. The active-site Cysteine persulfide intermediate is the C175.

This sequence belongs to the TrhO family.

It carries out the reaction uridine(34) in tRNA + AH2 + O2 = 5-hydroxyuridine(34) in tRNA + A + H2O. Catalyzes oxygen-dependent 5-hydroxyuridine (ho5U) modification at position 34 in tRNAs. This Roseobacter denitrificans (strain ATCC 33942 / OCh 114) (Erythrobacter sp. (strain OCh 114)) protein is tRNA uridine(34) hydroxylase.